A 436-amino-acid polypeptide reads, in one-letter code: Trigger factor (436 aa).

Residues 161-255 enclose the PPIase FKBP-type domain; it reads DDVAIIDFKT…VKEVREKQLP (95 aa).

Belongs to the FKBP-type PPIase family. Tig subfamily.

It localises to the cytoplasm. The enzyme catalyses [protein]-peptidylproline (omega=180) = [protein]-peptidylproline (omega=0). Its function is as follows. Involved in protein export. Acts as a chaperone by maintaining the newly synthesized protein in an open conformation. Functions as a peptidyl-prolyl cis-trans isomerase. In Akkermansia muciniphila (strain ATCC BAA-835 / DSM 22959 / JCM 33894 / BCRC 81048 / CCUG 64013 / CIP 107961 / Muc), this protein is Trigger factor.